The sequence spans 384 residues: Shufflon-specific DNA recombinase (384 aa).

The Core-binding (CB) domain maps to 9-96 (MSLSRALDKY…LLSSLFNIAR (88 aa)). The Tyr recombinase domain occupies 118–284 (GRDRRLTSSE…RAWQLVSKLD (167 aa)). Catalysis depends on residues Arg155, Lys180, His235, Arg238, and His262. Residue Tyr271 is the O-(3'-phospho-DNA)-tyrosine intermediate of the active site.

It belongs to the 'phage' integrase family.

Its function is as follows. Shufflon-specific DNA recombinase. The polypeptide is Shufflon-specific DNA recombinase (rci) (Escherichia coli).